Here is a 352-residue protein sequence, read N- to C-terminus: DNA polymerase IV (352 aa).

One can recognise a UmuC domain in the interval isoleucine 4–glycine 185. Residues aspartate 8 and aspartate 103 each contribute to the Mg(2+) site. Residue glutamate 104 is part of the active site.

The protein belongs to the DNA polymerase type-Y family. As to quaternary structure, monomer. Requires Mg(2+) as cofactor.

It is found in the cytoplasm. It catalyses the reaction DNA(n) + a 2'-deoxyribonucleoside 5'-triphosphate = DNA(n+1) + diphosphate. Its function is as follows. Poorly processive, error-prone DNA polymerase involved in untargeted mutagenesis. Copies undamaged DNA at stalled replication forks, which arise in vivo from mismatched or misaligned primer ends. These misaligned primers can be extended by PolIV. Exhibits no 3'-5' exonuclease (proofreading) activity. May be involved in translesional synthesis, in conjunction with the beta clamp from PolIII. This is DNA polymerase IV from Pectobacterium atrosepticum (strain SCRI 1043 / ATCC BAA-672) (Erwinia carotovora subsp. atroseptica).